An 886-amino-acid chain; its full sequence is DNA double-strand break repair Rad50 ATPase (886 aa).

ATP contacts are provided by residues R13, 33–39, and Q128; that span reads NGAGKSS. Coiled-coil stretches lie at residues 183–360 and 400–433; these read EQIK…LLET and KEIT…LKSA. A Zinc-hook domain is found at 392–489; sequence LSKAKEEEKE…RLEKVEKALE (98 aa). Zn(2+) contacts are provided by C437 and C440. Coiled coils occupy residues 489–518 and 545–713; these read EKQE…DAEK and SSAS…KKVE. 792-797 serves as a coordination point for ATP; that stretch reads FLSGGE.

It belongs to the SMC family. RAD50 subfamily. In terms of assembly, homodimer. Forms a heterotetramer composed of two Mre11 subunits and two Rad50 subunits. Requires Zn(2+) as cofactor.

In terms of biological role, part of the Rad50/Mre11 complex, which is involved in the early steps of DNA double-strand break (DSB) repair. The complex may facilitate opening of the processed DNA ends to aid in the recruitment of HerA and NurA. Rad50 controls the balance between DNA end bridging and DNA resection via ATP-dependent structural rearrangements of the Rad50/Mre11 complex. This chain is DNA double-strand break repair Rad50 ATPase, found in Archaeoglobus fulgidus (strain ATCC 49558 / DSM 4304 / JCM 9628 / NBRC 100126 / VC-16).